The chain runs to 156 residues: SsrA-binding protein (156 aa).

Belongs to the SmpB family.

It is found in the cytoplasm. Required for rescue of stalled ribosomes mediated by trans-translation. Binds to transfer-messenger RNA (tmRNA), required for stable association of tmRNA with ribosomes. tmRNA and SmpB together mimic tRNA shape, replacing the anticodon stem-loop with SmpB. tmRNA is encoded by the ssrA gene; the 2 termini fold to resemble tRNA(Ala) and it encodes a 'tag peptide', a short internal open reading frame. During trans-translation Ala-aminoacylated tmRNA acts like a tRNA, entering the A-site of stalled ribosomes, displacing the stalled mRNA. The ribosome then switches to translate the ORF on the tmRNA; the nascent peptide is terminated with the 'tag peptide' encoded by the tmRNA and targeted for degradation. The ribosome is freed to recommence translation, which seems to be the essential function of trans-translation. The chain is SsrA-binding protein from Staphylococcus carnosus (strain TM300).